The following is a 69-amino-acid chain: Guanine nucleotide-binding protein G(I)/G(S)/G(O) subunit gamma-T2 (69 aa).

Cys66 carries the post-translational modification Cysteine methyl ester. Cys66 is lipidated: S-farnesyl cysteine. A propeptide spans 67 to 69 (IIS) (removed in mature form).

This sequence belongs to the G protein gamma family. In terms of assembly, g proteins are composed of 3 units, alpha, beta and gamma.

The protein localises to the cell membrane. Functionally, guanine nucleotide-binding proteins (G proteins) are involved as a modulator or transducer in various transmembrane signaling systems. The beta and gamma chains are required for the GTPase activity, for replacement of GDP by GTP, and for G protein-effector interaction. In Bos taurus (Bovine), this protein is Guanine nucleotide-binding protein G(I)/G(S)/G(O) subunit gamma-T2 (GNGT2).